A 347-amino-acid polypeptide reads, in one-letter code: Peroxidase C2 (347 aa).

The N-terminal stretch at 1–24 (MHSSSSLIKLGFLLLLLNVSLSHA) is a signal peptide. 4 cysteine pairs are disulfide-bonded: Cys-35–Cys-115, Cys-68–Cys-73, Cys-121–Cys-325, and Cys-201–Cys-233. Catalysis depends on His-66, which acts as the Proton acceptor. Residues Asp-67, Val-70, Gly-72, Asp-74, and Ser-76 each coordinate Ca(2+). A glycan (N-linked (GlcNAc...) asparagine) is linked at Asn-81. Residue Pro-163 participates in substrate binding. Position 194 (His-194) interacts with heme b. Thr-195 lines the Ca(2+) pocket. Asn-210 and Asn-238 each carry an N-linked (GlcNAc...) asparagine glycan. Residues Asp-246, Thr-249, and Asp-254 each coordinate Ca(2+).

The protein belongs to the peroxidase family. Classical plant (class III) peroxidase subfamily. Requires Ca(2+) as cofactor. Heme b serves as cofactor.

The protein localises to the secreted. The protein resides in the vacuole. It catalyses the reaction 2 a phenolic donor + H2O2 = 2 a phenolic radical donor + 2 H2O. Functionally, removal of H(2)O(2), oxidation of toxic reductants, biosynthesis and degradation of lignin, suberization, auxin catabolism, response to environmental stresses such as wounding, pathogen attack and oxidative stress. These functions might be dependent on each isozyme/isoform in each plant tissue. In Armoracia rusticana (Horseradish), this protein is Peroxidase C2 (PRXC2).